A 203-amino-acid chain; its full sequence is Endo-type membrane-bound lytic murein transglycosylase A (203 aa).

Positions 1 to 15 (MKLRWFAFLIVLLAG) are cleaved as a signal peptide. The N-palmitoyl cysteine moiety is linked to residue cysteine 16. The S-diacylglycerol cysteine moiety is linked to residue cysteine 16.

The protein belongs to the transglycosylase Slt family.

Its subcellular location is the cell outer membrane. The enzyme catalyses Endolytic cleavage of the (1-&gt;4)-beta-glycosidic linkage between N-acetylmuramic acid (MurNAc) and N-acetylglucosamine (GlcNAc) residues in peptidoglycan with concomitant formation of a 1,6-anhydrobond in the MurNAc residue.. Its function is as follows. Murein-degrading enzyme. May play a role in recycling of muropeptides during cell elongation and/or cell division. Preferentially cleaves at a distance of more than two disaccharide units from the ends of the glycan chain. This Escherichia coli (strain K12 / MC4100 / BW2952) protein is Endo-type membrane-bound lytic murein transglycosylase A.